The following is a 397-amino-acid chain: Carnitine transport ATP-binding protein OpuCA (397 aa).

The 235-residue stretch at 2 to 236 folds into the ABC transporter domain; the sequence is LKFEHVTKTY…PANSFVEDFI (235 aa). Position 35–42 (35–42) interacts with ATP; sequence GPSGCGKT. 2 consecutive CBS domains span residues 255–311 and 315–373; these read MNTN…ATSV and IEKN…WGTL. Residues 377-397 form a disordered region; that stretch reads TENQEEQADSKTTEPEMKQEG. The span at 384–397 shows a compositional bias: basic and acidic residues; it reads ADSKTTEPEMKQEG.

The protein belongs to the ABC transporter superfamily. The complex is composed of two ATP-binding proteins (OpuCA), two transmembrane proteins (OpuCB and OpuCD) and a solute-binding protein (OpuCC).

The enzyme catalyses a quaternary ammonium(out) + ATP + H2O = a quaternary ammonium(in) + ADP + phosphate + H(+). In terms of biological role, part of the ABC transporter complex OpuCABCD involved in carnitine uptake. Probably responsible for energy coupling to the transport system. Involved, with BetL and GbuABC, in osmoprotection and cryoprotection of Listeria. Can also mediate weak glycine betaine transport. In Listeria monocytogenes serotype 1/2a (strain 10403S), this protein is Carnitine transport ATP-binding protein OpuCA (opuCA).